A 710-amino-acid chain; its full sequence is uncharacterized protein (710 aa).

The disordered stretch occupies residues 1–20 (MKQRQARLIGTPSQTRRQQE). A coiled-coil region spans residues 13 to 42 (SQTRRQQELAEKLEKVKEVLEDEKKRQFNE).

It belongs to the IIV-6 268L family.

This is an uncharacterized protein from Invertebrate iridescent virus 6 (IIV-6).